The sequence spans 325 residues: Glutarate 2-hydroxylase (325 aa).

Fe cation is bound by residues H160, D162, and H292.

Belongs to the glutarate hydroxylase family. In terms of assembly, homotetramer. It depends on Fe(2+) as a cofactor.

It catalyses the reaction glutarate + 2-oxoglutarate + O2 = (S)-2-hydroxyglutarate + succinate + CO2. The protein operates within amino-acid degradation. Acts as an alpha-ketoglutarate-dependent dioxygenase catalyzing hydroxylation of glutarate (GA) to L-2-hydroxyglutarate (L2HG). Functions in a L-lysine degradation pathway that proceeds via cadaverine, glutarate and L-2-hydroxyglutarate. This is Glutarate 2-hydroxylase from Escherichia coli (strain UTI89 / UPEC).